Reading from the N-terminus, the 477-residue chain is ATP-dependent rRNA helicase RRP3 (477 aa).

The disordered stretch occupies residues 1–22 (MSVKVDGMINKKSKTHSKKLDA). The Q motif signature appears at 65–93 (KSFNELKLIPELLEAIQQMKFTKPTPIQS). The Helicase ATP-binding domain maps to 96–267 (IPHALEGKDI…RASLHNPVRV (172 aa)). 109–116 (AQTGSGKT) lines the ATP pocket. A DEAD box motif is present at residues 215-218 (DEAD). The Helicase C-terminal domain maps to 294–438 (YLIHLLNEFL…KDPSPSKAVL (145 aa)). Positions 452 to 477 (AIRQTKDFHEKRNPKKNRDDRDREER) are disordered.

Belongs to the DEAD box helicase family. DDX47/RRP3 subfamily. Interacts with the SSU processome.

Its subcellular location is the nucleus. It catalyses the reaction ATP + H2O = ADP + phosphate + H(+). Functionally, ATP-dependent rRNA helicase required for pre-ribosomal RNA processing. Involved in the maturation of the 35S-pre-rRNA and to its cleavage to mature 18S rRNA. This is ATP-dependent rRNA helicase RRP3 from Debaryomyces hansenii (strain ATCC 36239 / CBS 767 / BCRC 21394 / JCM 1990 / NBRC 0083 / IGC 2968) (Yeast).